Reading from the N-terminus, the 505-residue chain is Histidine ammonia-lyase (505 aa).

Positions 141-143 form a cross-link, 5-imidazolinone (Ala-Gly); sequence ASG. The residue at position 142 (serine 142) is a 2,3-didehydroalanine (Ser).

This sequence belongs to the PAL/histidase family. In terms of processing, contains an active site 4-methylidene-imidazol-5-one (MIO), which is formed autocatalytically by cyclization and dehydration of residues Ala-Ser-Gly.

The protein localises to the cytoplasm. It carries out the reaction L-histidine = trans-urocanate + NH4(+). It functions in the pathway amino-acid degradation; L-histidine degradation into L-glutamate; N-formimidoyl-L-glutamate from L-histidine: step 1/3. In Bacillus thuringiensis subsp. konkukian (strain 97-27), this protein is Histidine ammonia-lyase.